The following is an 86-amino-acid chain: Anti-adapter protein IraP (86 aa).

Residues 1–36 (MKNLIAELLFKLAQKEEESKELCAQVEALEIIVTAM) adopt a coiled-coil conformation.

This sequence belongs to the IraP family. In terms of assembly, interacts with RssB.

Its subcellular location is the cytoplasm. Functionally, inhibits RpoS proteolysis by regulating RssB activity, thereby increasing the stability of the sigma stress factor RpoS especially during phosphate starvation, but also in stationary phase and during nitrogen starvation. Its effect on RpoS stability is due to its interaction with RssB, which probably blocks the interaction of RssB with RpoS, and the consequent delivery of the RssB-RpoS complex to the ClpXP protein degradation pathway. This Shigella sonnei (strain Ss046) protein is Anti-adapter protein IraP.